The chain runs to 292 residues: uncharacterized protein (292 aa).

A helical membrane pass occupies residues 13 to 35 (LFILFIIVVCIYLLPRVAINAFY).

It belongs to the serine esterase family.

It localises to the membrane. This is an uncharacterized protein from Salmonella typhimurium (strain LT2 / SGSC1412 / ATCC 700720).